The sequence spans 1103 residues: Retinal guanylyl cyclase 2 (1103 aa).

Positions 1–46 (MFLAPWPFSHLMLWFVTLGRQRGQHGLASFKLLWCLWLLVLMSLPL) are cleaved as a signal peptide. At 47–465 (QVWAPPYKIG…DGRICQGGIN (419 aa)) the chain is on the extracellular side. Cys-104 and Cys-132 are oxidised to a cystine. The helical transmembrane segment at 466–490 (PTFALMVCLALLIALLSINGFAYFI) threads the bilayer. Residues 491–1103 (RHRINKIQLI…FQRRKQKSSW (613 aa)) are Cytoplasmic-facing. One can recognise a Protein kinase domain in the interval 532–812 (FQITSEVQSG…DEIFNQFKTF (281 aa)). Residues 884-1014 (TLYFSDIVGF…DTVNTASRME (131 aa)) form the Guanylate cyclase domain.

The protein belongs to the adenylyl cyclase class-4/guanylyl cyclase family. As to quaternary structure, homodimer. Interacts with RD3; promotes the exit of GUCY2F from the endoplasmic reticulum and its trafficking to the photoreceptor outer segments. There are 9 conserved cysteine residues in sensory guanylate cyclases, 6 in the extracellular domain, which may be involved in intra- or interchain disulfide bonds. As to expression, expressed specifically in retina.

The protein localises to the membrane. Its subcellular location is the photoreceptor outer segment membrane. It carries out the reaction GTP = 3',5'-cyclic GMP + diphosphate. With respect to regulation, activated by GUCA1B when free calcium ions concentration is low, and inhibited by GUCA1B when free calcium ions concentration is high. Inhibited by RD3. Responsible for the synthesis of cyclic GMP (cGMP) in rods and cones of photoreceptors. Plays an essential role in phototransduction, by mediating cGMP replenishment. May also participate in the trafficking of membrane-asociated proteins to the photoreceptor outer segment membrane. The protein is Retinal guanylyl cyclase 2 (GUCY2F) of Bos taurus (Bovine).